The chain runs to 155 residues: Small ribosomal subunit protein uS7 (155 aa).

This sequence belongs to the universal ribosomal protein uS7 family. Part of the 30S ribosomal subunit. Contacts proteins S9 and S11.

One of the primary rRNA binding proteins, it binds directly to 16S rRNA where it nucleates assembly of the head domain of the 30S subunit. Is located at the subunit interface close to the decoding center, probably blocks exit of the E-site tRNA. The sequence is that of Small ribosomal subunit protein uS7 from Chloroherpeton thalassium (strain ATCC 35110 / GB-78).